The sequence spans 86 residues: Mu-theraphotoxin-Cg2a 3 (86 aa).

A signal peptide spans Met-1–Ala-21. A propeptide spanning residues Ala-22–Arg-50 is cleaved from the precursor. Disulfide bonds link Cys-52-Cys-66, Cys-59-Cys-71, and Cys-65-Cys-78. Phenylalanine amide is present on Phe-84.

It belongs to the neurotoxin 10 (Hwtx-1) family. 37 (Jztx-31) subfamily. Expressed by the venom gland.

It is found in the secreted. Its function is as follows. Inhibits both peak current and fast inactivation of voltage-gated sodium channels (Nav) channels. Inhibits the inactivation of Nav on DRG neurons (EC(50)=1.77 uM) and peak current of cardiac myocytes (IC(50)=0.90 uM). The protein is Mu-theraphotoxin-Cg2a 3 of Chilobrachys guangxiensis (Chinese earth tiger tarantula).